A 311-amino-acid polypeptide reads, in one-letter code: 4-diphosphocytidyl-2-C-methyl-D-erythritol kinase (311 aa).

Lysine 11 is an active-site residue. 94 to 104 lines the ATP pocket; the sequence is PVAAGLAGGSA. The active site involves aspartate 136.

This sequence belongs to the GHMP kinase family. IspE subfamily.

It catalyses the reaction 4-CDP-2-C-methyl-D-erythritol + ATP = 4-CDP-2-C-methyl-D-erythritol 2-phosphate + ADP + H(+). Its pathway is isoprenoid biosynthesis; isopentenyl diphosphate biosynthesis via DXP pathway; isopentenyl diphosphate from 1-deoxy-D-xylulose 5-phosphate: step 3/6. Its function is as follows. Catalyzes the phosphorylation of the position 2 hydroxy group of 4-diphosphocytidyl-2C-methyl-D-erythritol. The sequence is that of 4-diphosphocytidyl-2-C-methyl-D-erythritol kinase from Synechococcus sp. (strain JA-2-3B'a(2-13)) (Cyanobacteria bacterium Yellowstone B-Prime).